A 326-amino-acid chain; its full sequence is DNA-binding death effector domain-containing protein 2 (326 aa).

The DED domain maps to 25–104 (SLHRMFEVVG…RHDLLPHLAR (80 aa)). The Nuclear localization signal signature appears at 104–109 (RKRRRP). The tract at residues 104–194 (RKRRRPVSPE…PARPSSEGKV (91 aa)) is disordered. Low complexity predominate over residues 136 to 146 (SSSSANSQQGQ). The short motif at 155 to 173 (KRQRRSRGRPSGGARRRRR) is the Bipartite nuclear localization signal element. The segment covering 155–174 (KRQRRSRGRPSGGARRRRRG) has biased composition (basic residues). Over residues 175 to 191 (APAAPQQQSEPARPSSE) the composition is skewed to low complexity.

In terms of assembly, interacts with CASP8, CASP10 and GTF3C3. Homodimerizes and heterodimerizes with DEDD. As to expression, expressed in most tissues. High levels were found in liver, kidney, heart, ovary, spleen, testes, skeletal muscle and peripheral blood leukocytes. Expression was absent or low in colon and small intestine. Expression is relatively high in the tumor cell lines chronic myologenous leukemia K-562 and the colorectal adenocarcinoma SW480. Expression is moderate in the cervical carcinoma HeLa, the Burkitt's lymphoma Raji, the lung carcinoma A-549, and the melanoma G-361. In contrast, two leukemia cell lines, HL-60 (promyelocytic leukemia) and MOLT-4 (lymphoblastic leukemia), show relatively low levels.

Its subcellular location is the nucleus. It is found in the nucleolus. May play a critical role in death receptor-induced apoptosis and may target CASP8 and CASP10 to the nucleus. May regulate degradation of intermediate filaments during apoptosis. May play a role in the general transcription machinery in the nucleus and might be an important regulator of the activity of GTF3C3. The sequence is that of DNA-binding death effector domain-containing protein 2 (DEDD2) from Homo sapiens (Human).